The sequence spans 89 residues: Small ribosomal subunit protein uS15 (89 aa).

It belongs to the universal ribosomal protein uS15 family. As to quaternary structure, part of the 30S ribosomal subunit. Forms a bridge to the 50S subunit in the 70S ribosome, contacting the 23S rRNA.

In terms of biological role, one of the primary rRNA binding proteins, it binds directly to 16S rRNA where it helps nucleate assembly of the platform of the 30S subunit by binding and bridging several RNA helices of the 16S rRNA. Forms an intersubunit bridge (bridge B4) with the 23S rRNA of the 50S subunit in the ribosome. The protein is Small ribosomal subunit protein uS15 of Pseudomonas fluorescens (strain Pf0-1).